The following is a 43-amino-acid chain: MDFITGFFGSLNFEVIFQLTFVSLILISGPVVIFLLAIRGGDM.

The helical transmembrane segment at 15-35 (VIFQLTFVSLILISGPVVIFL) threads the bilayer.

This sequence belongs to the Psb30/Ycf12 family. In terms of assembly, PSII is composed of 1 copy each of membrane proteins PsbA, PsbB, PsbC, PsbD, PsbE, PsbF, PsbH, PsbI, PsbJ, PsbK, PsbL, PsbM, PsbT, PsbX, PsbY, PsbZ, Psb30/Ycf12, peripheral proteins PsbO, CyanoQ (PsbQ), PsbU, PsbV and a large number of cofactors. It forms dimeric complexes.

It localises to the cellular thylakoid membrane. A core subunit of photosystem II (PSII), probably helps stabilize the reaction center. The protein is Photosystem II reaction center protein Psb30 of Picosynechococcus sp. (strain ATCC 27264 / PCC 7002 / PR-6) (Agmenellum quadruplicatum).